The primary structure comprises 642 residues: Threonine--tRNA ligase (642 aa).

In terms of domain architecture, TGS spans 1-61 (MPVITLPDGS…ENDTQLSIIT (61 aa)). The interval 243–534 (DHRKIGKQLD…LTEEFAGFFP (292 aa)) is catalytic. N6-acetyllysine is present on lysine 286. Residues cysteine 334, histidine 385, and histidine 511 each contribute to the Zn(2+) site.

It belongs to the class-II aminoacyl-tRNA synthetase family. In terms of assembly, homodimer. Requires Zn(2+) as cofactor.

It is found in the cytoplasm. It catalyses the reaction tRNA(Thr) + L-threonine + ATP = L-threonyl-tRNA(Thr) + AMP + diphosphate + H(+). In terms of biological role, catalyzes the attachment of threonine to tRNA(Thr) in a two-step reaction: L-threonine is first activated by ATP to form Thr-AMP and then transferred to the acceptor end of tRNA(Thr). Also edits incorrectly charged L-seryl-tRNA(Thr). The chain is Threonine--tRNA ligase from Shigella dysenteriae serotype 1 (strain Sd197).